Here is a 192-residue protein sequence, read N- to C-terminus: LexA repressor (192 aa).

Positions 15–35 form a DNA-binding region, H-T-H motif; the sequence is RAEIARELGFRSANAAEEHLK. Residues Ser109 and Lys146 each act as for autocatalytic cleavage activity in the active site.

The protein belongs to the peptidase S24 family. Homodimer.

It carries out the reaction Hydrolysis of Ala-|-Gly bond in repressor LexA.. In terms of biological role, represses a number of genes involved in the response to DNA damage (SOS response), including recA and lexA. In the presence of single-stranded DNA, RecA interacts with LexA causing an autocatalytic cleavage which disrupts the DNA-binding part of LexA, leading to derepression of the SOS regulon and eventually DNA repair. The chain is LexA repressor from Photobacterium profundum (strain SS9).